Consider the following 876-residue polypeptide: Valine--tRNA ligase (876 aa).

The short motif at 44 to 54 (PNVTGKLHLGH) is the 'HIGH' region element. The 'KMSKS' region signature appears at 520–524 (KMSKS). An ATP-binding site is contributed by Lys523. Residues 805-876 (LEGLIDMDKE…VKARIEQLKA (72 aa)) are a coiled coil.

This sequence belongs to the class-I aminoacyl-tRNA synthetase family. ValS type 1 subfamily. Monomer.

The protein resides in the cytoplasm. It carries out the reaction tRNA(Val) + L-valine + ATP = L-valyl-tRNA(Val) + AMP + diphosphate. Catalyzes the attachment of valine to tRNA(Val). As ValRS can inadvertently accommodate and process structurally similar amino acids such as threonine, to avoid such errors, it has a 'posttransfer' editing activity that hydrolyzes mischarged Thr-tRNA(Val) in a tRNA-dependent manner. The sequence is that of Valine--tRNA ligase from Staphylococcus aureus (strain JH1).